A 407-amino-acid polypeptide reads, in one-letter code: Inhibin beta B chain (407 aa).

A signal peptide spans 1–28 (MDGLPGRALGAACLLLLAAGWLGPEAWG). The disordered stretch occupies residues 26 to 62 (AWGSPTPPPTPAAPPPPPPPGSPGGSQDTCTSCGGFR). Positions 29-292 (SPTPPPTPAA…GDSRHRIRKR (264 aa)) are excised as a propeptide. Residues 30–47 (PTPPPTPAAPPPPPPPGS) are compositionally biased toward pro residues. A glycan (N-linked (GlcNAc...) asparagine) is linked at Asn93. Intrachain disulfides connect Cys296–Cys304, Cys303–Cys372, Cys332–Cys404, and Cys336–Cys406.

Belongs to the TGF-beta family. As to quaternary structure, dimeric, linked by one or more disulfide bonds. Inhibin B is a dimer of alpha and beta-B. Activin B is a homodimer of beta-B. Activin AB is a dimer of beta-A and beta-B. Interacts with FST and FSTL3. Activin B interacts with BMPR2.

The protein localises to the secreted. In terms of biological role, inhibins and activins inhibit and activate, respectively, the secretion of follitropin by the pituitary gland. Inhibins/activins are involved in regulating a number of diverse functions such as hypothalamic and pituitary hormone secretion, gonadal hormone secretion, germ cell development and maturation, erythroid differentiation, insulin secretion, nerve cell survival, embryonic axial development or bone growth, depending on their subunit composition. Inhibins appear to oppose the functions of activins. Its function is as follows. Activin B is a dimer of alpha and beta-B that plays a role in several essential biological processes including embryonic development, stem cell maintenance and differentiation, haematopoiesis, cell proliferation and wound healing. Signals through type I receptor ACVR1C, abundantly expressed in pancreatic beta cells, and type II receptors like ACVR2A or BMPR2. Upon ligand binding, these receptors phosphorylate intracellular signaling mediators SMAD2 and SMAD3, which form a complex with SMAD4, translocate to the nucleus, and regulate gene expression. Plays a crucial role in the induction of hepcidin by inflammation through activation of ACVR1C and subsequent phosphorylation of SMAD1/5/8. Regulates adipocyte lipid metabolism by decreasing non-esterified fatty acids and glycerol release and increases intracellular triglyceride content. Stimulates wound healing by promoting cell migration and hair follicle regeneration through the JNK and ERK signaling pathways downstream of RHOA. Inhibin B is a dimer of alpha and beta-B that plays a crucial role in the regulation of the reproductive system by inhibiting the secretion of follicle-stimulating hormone (FSH) from the anterior pituitary gland. Thereby, maintains reproductive homeostasis in both males and females. Acts as a more potent suppressor of FSH release than inhibin A. Functions as competitive receptor antagonist binding activin type II receptors with high affinity in the presence of the TGF-beta type III coreceptor/TGFBR3L. The sequence is that of Inhibin beta B chain (INHBB) from Homo sapiens (Human).